The following is an 84-amino-acid chain: MSMRLAHRLQILLDDECHRRITAVARERGVPVATVVREAIDRGLVSPAGRRKSAGRRLLDAADMSVPEPRELKQELEALRARRG.

Its function is as follows. Antitoxin component of a possible type II toxin-antitoxin (TA) system. The cognate toxin is VapC7. This is Putative antitoxin VapB7 (vapB7) from Mycobacterium tuberculosis (strain ATCC 25618 / H37Rv).